The chain runs to 115 residues: Disintegrin EC6 subunit alpha (115 aa).

A signal peptide spans 1–20 (MIQVLLVIICLAVFPYQGSS). Positions 21–47 (IILESGNINDYEIVYPKKVAVLPTGAM) are excised as a propeptide. One can recognise a Disintegrin domain in the interval 48-112 (NSVHPCCDPV…DCPRNRYKGK (65 aa)). 4 disulfides stabilise this stretch: C53/C76, C67/C73, C72/C97, and C85/C104. Positions 89-91 (MLD) match the Cell attachment site; atypical (MLD) motif.

Belongs to the disintegrin family. Dimeric disintegrin subfamily. In terms of assembly, heterodimer with subunit beta; disulfide-linked. In terms of tissue distribution, expressed by the venom gland.

Its subcellular location is the secreted. Functionally, potently inhibits adhesion of alpha-4/beta-1 (ITGA4/ITGB1) and alpha-9/beta-1 (ITGA9/ITGB1) integrins to VCAM1, and adhesion of alpha-5/beta-1 (ITGA5/ITGB1) integrin to fibronectin. Has a much less effect on alpha-IIb/beta-3 (ITGA2B/ITGB3) integrin. Also potently inhibits neutrophil migration across TNF-alpha-activated human umbilical endothelial cells. This chain is Disintegrin EC6 subunit alpha, found in Echis carinatus sochureki (Saw-scaled viper).